Here is a 364-residue protein sequence, read N- to C-terminus: Phosphoserine aminotransferase (364 aa).

R46 is an L-glutamate binding site. Pyridoxal 5'-phosphate contacts are provided by residues 80-81, W106, T157, D176, and Q199; that span reads AR. K200 carries the N6-(pyridoxal phosphate)lysine modification. 241–242 contributes to the pyridoxal 5'-phosphate binding site; the sequence is NT.

Belongs to the class-V pyridoxal-phosphate-dependent aminotransferase family. SerC subfamily. In terms of assembly, homodimer. It depends on pyridoxal 5'-phosphate as a cofactor.

The protein localises to the cytoplasm. It catalyses the reaction O-phospho-L-serine + 2-oxoglutarate = 3-phosphooxypyruvate + L-glutamate. The enzyme catalyses 4-(phosphooxy)-L-threonine + 2-oxoglutarate = (R)-3-hydroxy-2-oxo-4-phosphooxybutanoate + L-glutamate. Its pathway is amino-acid biosynthesis; L-serine biosynthesis; L-serine from 3-phospho-D-glycerate: step 2/3. It functions in the pathway cofactor biosynthesis; pyridoxine 5'-phosphate biosynthesis; pyridoxine 5'-phosphate from D-erythrose 4-phosphate: step 3/5. Functionally, catalyzes the reversible conversion of 3-phosphohydroxypyruvate to phosphoserine and of 3-hydroxy-2-oxo-4-phosphonooxybutanoate to phosphohydroxythreonine. In Vibrio vulnificus (strain YJ016), this protein is Phosphoserine aminotransferase.